A 1045-amino-acid polypeptide reads, in one-letter code: Extracellular serine protease (1045 aa).

An N-terminal signal peptide occupies residues 1-27 (MILNKKLKLAYCVFLGCYGLSLHSSLA). The region spanning 49–396 (QWGLEAISAE…WGRVNLRDAI (348 aa)) is the Peptidase S8 domain. Residues Asp76, His112, and Ser341 each act as charge relay system in the active site. Residues 646-1045 (SLASTENDKE…SVNAGLTWRF (400 aa)) constitute a propeptide that is removed on maturation. In terms of domain architecture, Autotransporter spans 769 to 1045 (IKADDNGAWA…SVNAGLTWRF (277 aa)).

Belongs to the peptidase S8 family.

Its subcellular location is the secreted. In Serratia marcescens, this protein is Extracellular serine protease.